The chain runs to 330 residues: Phosphate acyltransferase (330 aa).

This sequence belongs to the PlsX family. Homodimer. Probably interacts with PlsY.

It is found in the cytoplasm. It carries out the reaction a fatty acyl-[ACP] + phosphate = an acyl phosphate + holo-[ACP]. It participates in lipid metabolism; phospholipid metabolism. Functionally, catalyzes the reversible formation of acyl-phosphate (acyl-PO(4)) from acyl-[acyl-carrier-protein] (acyl-ACP). This enzyme utilizes acyl-ACP as fatty acyl donor, but not acyl-CoA. The sequence is that of Phosphate acyltransferase from Streptococcus agalactiae serotype III (strain NEM316).